Here is a 347-residue protein sequence, read N- to C-terminus: MAEERHHTEHIPQWKKDEIENIKELIQSHKVFGMVRIEGILATKIQKIRRDLKDVAVLKVSRNTLTERALNQLGESIPEMTRYLDNQTALIFTNESPFKLYKLLEQTKTPSPIKAGAIAPEDIIVQKGPTSFPPGPILGELQSAGIPASIDAGKVAVKETKVVCKAGEAVPQKLATMLSKLEIYPLIVGLDLRAAYDDGTIYEPELLAVDESKYFSDIIRAAQNAFNLSVNTAYPTGATIGTLLAKAYAESKSLGVNAVILEPGVMDSLLAKAHVQMTSVASEAAEKDANAVDDDLREVLGAAASAAAAATVAAPAAEEEKKEEEPEEEEEDHAEEDGMAGLGALFG.

Positions 310-347 (ATVAAPAAEEEKKEEEPEEEEEDHAEEDGMAGLGALFG) are disordered. A compositionally biased stretch (acidic residues) spans 325 to 338 (EPEEEEEDHAEEDG).

The protein belongs to the universal ribosomal protein uL10 family. Part of the 50S ribosomal subunit. Forms part of the ribosomal stalk which helps the ribosome interact with GTP-bound translation factors. Forms a heptameric L10(L12)2(L12)2(L12)2 complex, where L10 forms an elongated spine to which the L12 dimers bind in a sequential fashion.

Functionally, forms part of the ribosomal stalk, playing a central role in the interaction of the ribosome with GTP-bound translation factors. The chain is Large ribosomal subunit protein uL10 from Methanosarcina mazei (strain ATCC BAA-159 / DSM 3647 / Goe1 / Go1 / JCM 11833 / OCM 88) (Methanosarcina frisia).